The sequence spans 151 residues: D-aminoacyl-tRNA deacylase (151 aa).

The Gly-cisPro motif, important for rejection of L-amino acids signature appears at 137–138; that stretch reads GP.

Belongs to the DTD family. Homodimer.

Its subcellular location is the cytoplasm. The catalysed reaction is glycyl-tRNA(Ala) + H2O = tRNA(Ala) + glycine + H(+). The enzyme catalyses a D-aminoacyl-tRNA + H2O = a tRNA + a D-alpha-amino acid + H(+). In terms of biological role, an aminoacyl-tRNA editing enzyme that deacylates mischarged D-aminoacyl-tRNAs. Also deacylates mischarged glycyl-tRNA(Ala), protecting cells against glycine mischarging by AlaRS. Acts via tRNA-based rather than protein-based catalysis; rejects L-amino acids rather than detecting D-amino acids in the active site. By recycling D-aminoacyl-tRNA to D-amino acids and free tRNA molecules, this enzyme counteracts the toxicity associated with the formation of D-aminoacyl-tRNA entities in vivo and helps enforce protein L-homochirality. This chain is D-aminoacyl-tRNA deacylase, found in Solibacter usitatus (strain Ellin6076).